The primary structure comprises 200 residues: Transcription factor FapR (200 aa).

Belongs to the FapR family.

In terms of biological role, transcriptional factor involved in regulation of membrane lipid biosynthesis by repressing genes involved in fatty acid and phospholipid metabolism. The chain is Transcription factor FapR from Thermoanaerobacter pseudethanolicus (strain ATCC 33223 / 39E) (Clostridium thermohydrosulfuricum).